The primary structure comprises 367 residues: E3 ubiquitin-protein ligase RGLG3 (367 aa).

The 221-residue stretch at Asn37–Leu257 folds into the VWFA domain. The RING-type zinc finger occupies Cys323–Arg356.

In terms of assembly, interacts with UBC30, GRXS17 and GLB3. Binds to and coactivates GAF1/IDD2 and ENY/IDD1. Widely expressed.

It localises to the cytoplasm. It is found in the nucleus. It catalyses the reaction S-ubiquitinyl-[E2 ubiquitin-conjugating enzyme]-L-cysteine + [acceptor protein]-L-lysine = [E2 ubiquitin-conjugating enzyme]-L-cysteine + N(6)-ubiquitinyl-[acceptor protein]-L-lysine.. Its function is as follows. Possesses E3 ubiquitin-protein ligase in vitro. Acts as upstream modulator of jasmonate (JA) signaling in response to various stimuli, such as JA-inhibited root growth, JA-inductive gene expression, coronatine-mediated pathogen susceptibility, wound-stimulated expression of JA-responsive genes and wound-induced JA biosynthesis. Controls fumonisin B1 (FB1)-triggered programmed cell death (PCD) by modulating the JA signaling pathway. May mediate salicylic acid (SA) suppression of JA signaling in FB1-induced responses. May mediate the formation of 'Lys-48'-linked multiubiquitin chains. Mediates the polyubiquitination and subsequent proteasomal degradation of the target protein GRXS17. In Arabidopsis thaliana (Mouse-ear cress), this protein is E3 ubiquitin-protein ligase RGLG3.